Reading from the N-terminus, the 320-residue chain is 4-diphosphocytidyl-2-C-methyl-D-erythritol kinase (320 aa).

Lys26 is a catalytic residue. 111-121 contributes to the ATP binding site; it reads PVAGGMAGGSA. Asp153 is an active-site residue.

This sequence belongs to the GHMP kinase family. IspE subfamily.

The catalysed reaction is 4-CDP-2-C-methyl-D-erythritol + ATP = 4-CDP-2-C-methyl-D-erythritol 2-phosphate + ADP + H(+). The protein operates within isoprenoid biosynthesis; isopentenyl diphosphate biosynthesis via DXP pathway; isopentenyl diphosphate from 1-deoxy-D-xylulose 5-phosphate: step 3/6. In terms of biological role, catalyzes the phosphorylation of the position 2 hydroxy group of 4-diphosphocytidyl-2C-methyl-D-erythritol. The sequence is that of 4-diphosphocytidyl-2-C-methyl-D-erythritol kinase from Mycobacterium marinum (strain ATCC BAA-535 / M).